The chain runs to 275 residues: 4-hydroxy-3-methylbut-2-enyl diphosphate reductase (275 aa).

Residue Cys12 participates in [4Fe-4S] cluster binding. (2E)-4-hydroxy-3-methylbut-2-enyl diphosphate contacts are provided by His40 and His70. Residues His40 and His70 each coordinate dimethylallyl diphosphate. The isopentenyl diphosphate site is built by His40 and His70. Cys92 contributes to the [4Fe-4S] cluster binding site. A (2E)-4-hydroxy-3-methylbut-2-enyl diphosphate-binding site is contributed by His119. Position 119 (His119) interacts with dimethylallyl diphosphate. His119 lines the isopentenyl diphosphate pocket. Glu121 acts as the Proton donor in catalysis. Thr151 lines the (2E)-4-hydroxy-3-methylbut-2-enyl diphosphate pocket. Position 181 (Cys181) interacts with [4Fe-4S] cluster. The (2E)-4-hydroxy-3-methylbut-2-enyl diphosphate site is built by Ser209, Ser210, Asn211, and Ser251. The dimethylallyl diphosphate site is built by Ser209, Ser210, Asn211, and Ser251. Isopentenyl diphosphate is bound by residues Ser209, Ser210, Asn211, and Ser251.

The protein belongs to the IspH family. The cofactor is [4Fe-4S] cluster.

It catalyses the reaction isopentenyl diphosphate + 2 oxidized [2Fe-2S]-[ferredoxin] + H2O = (2E)-4-hydroxy-3-methylbut-2-enyl diphosphate + 2 reduced [2Fe-2S]-[ferredoxin] + 2 H(+). It carries out the reaction dimethylallyl diphosphate + 2 oxidized [2Fe-2S]-[ferredoxin] + H2O = (2E)-4-hydroxy-3-methylbut-2-enyl diphosphate + 2 reduced [2Fe-2S]-[ferredoxin] + 2 H(+). It participates in isoprenoid biosynthesis; dimethylallyl diphosphate biosynthesis; dimethylallyl diphosphate from (2E)-4-hydroxy-3-methylbutenyl diphosphate: step 1/1. Its pathway is isoprenoid biosynthesis; isopentenyl diphosphate biosynthesis via DXP pathway; isopentenyl diphosphate from 1-deoxy-D-xylulose 5-phosphate: step 6/6. Its function is as follows. Catalyzes the conversion of 1-hydroxy-2-methyl-2-(E)-butenyl 4-diphosphate (HMBPP) into a mixture of isopentenyl diphosphate (IPP) and dimethylallyl diphosphate (DMAPP). Acts in the terminal step of the DOXP/MEP pathway for isoprenoid precursor biosynthesis. The protein is 4-hydroxy-3-methylbut-2-enyl diphosphate reductase of Thermotoga maritima (strain ATCC 43589 / DSM 3109 / JCM 10099 / NBRC 100826 / MSB8).